The sequence spans 498 residues: MRINPTTSGLGVSTLVEKNQGRIAQIIGPVLDVAFPPGKMPNIYNSLVVKGRDTAGQEINVTCEVQQLLGNNRVRAVAMSATDGLTRGMEVIDTGAPLSVPVGGATLGRIFNVLGEPVDNLGPVDTRTTSPIHRAAPAFTQLDTKLSIFETGIKVVDLLAPYRRGGKIGLFGGAGVGKTVLIMELINNIAKAHGGVSVFGGVGERTREGNDLYMEMKESGVINEENIAESKVALVYGQMNEPPGARMRVGLTALTMAEYFRDVNEQDVLLFIDNIFRFVQAGSEVSALLGRMPSAVGYQPTLSTEMGSLQERITSTKEGSITSIQAVYVPADDLTDPAPATTFAHLDATTVLSRGLAAKGIYPAVDPLDSTSTMLQPRIVGEEHYETAQRVKQTLQRYKELQDIIAILGLDELSEEDRLTVARARKIERFLSQPFFVAEVFTGSPGKYVGLAETIRGFQLILSGELDSFPEQAFYLVGNIDEATAKAMNLEVESKLKK.

172 to 179 (GGAGVGKT) provides a ligand contact to ATP.

Belongs to the ATPase alpha/beta chains family. As to quaternary structure, F-type ATPases have 2 components, CF(1) - the catalytic core - and CF(0) - the membrane proton channel. CF(1) has five subunits: alpha(3), beta(3), gamma(1), delta(1), epsilon(1). CF(0) has four main subunits: a(1), b(1), b'(1) and c(9-12).

It is found in the plastid. The protein localises to the chloroplast thylakoid membrane. It catalyses the reaction ATP + H2O + 4 H(+)(in) = ADP + phosphate + 5 H(+)(out). Produces ATP from ADP in the presence of a proton gradient across the membrane. The catalytic sites are hosted primarily by the beta subunits. This Nymphaea alba (White water-lily) protein is ATP synthase subunit beta, chloroplastic.